We begin with the raw amino-acid sequence, 133 residues long: Small ribosomal subunit protein uS8c (133 aa).

It belongs to the universal ribosomal protein uS8 family. As to quaternary structure, part of the 30S ribosomal subunit.

It localises to the plastid. The protein localises to the chloroplast. One of the primary rRNA binding proteins, it binds directly to 16S rRNA central domain where it helps coordinate assembly of the platform of the 30S subunit. The polypeptide is Small ribosomal subunit protein uS8c (rps8) (Cyanidium caldarium (Red alga)).